A 245-amino-acid chain; its full sequence is MLFVSAIIDYAGETATHIVEKIKNGDKHLKEKFIKDYIPFILNIVSSFYSSKTGDLKSSDEYSIGLMAFNEAIEKFDVNKSKSFLKFAEMVIKKRMIDYFRKTSSIGRKEIPFSYFNSNNETEFRKKINNLDIEEEFNSYEFICELRDFSKKLESFGLSINNLPDYMPKHKDSREMCINIAKKIVENKSIFDKLKTKKYIQMKELSKIIDVHPKTVERNRAFIICLCILFDNDYGNFKSYLNKIF.

The Polymerase core binding signature appears at 60 to 73; the sequence is DEYSIGLMAFNEAI. The H-T-H motif DNA-binding region spans 202-221; sequence MKELSKIIDVHPKTVERNRA.

Belongs to the sigma-70 factor family. SigI subfamily. As to quaternary structure, interacts with RsgI5.

The protein localises to the cytoplasm. Negatively regulated by the anti-sigma-I factor RsgI5. Binding of the polysaccharide substrate to RsgI5 may lead to the release and activation of SigI5. Functionally, sigma factors are initiation factors that promote the attachment of RNA polymerase to specific initiation sites and are then released. This sigma factor is involved in regulation of cellulosomal genes via an external polysaccharide-sensing mechanism. The sequence is that of RNA polymerase sigma factor SigI5 from Acetivibrio thermocellus (strain ATCC 27405 / DSM 1237 / JCM 9322 / NBRC 103400 / NCIMB 10682 / NRRL B-4536 / VPI 7372) (Clostridium thermocellum).